The following is a 513-amino-acid chain: Alpha,alpha-trehalose-phosphate synthase [UDP-forming] (513 aa).

Tyr-40 is subject to Phosphotyrosine. Tyr-104 and Asp-158 together coordinate D-glucose 6-phosphate. Positions 294 and 299 each coordinate UDP. UDP-alpha-D-glucose-binding residues include Arg-294 and Lys-299. D-glucose 6-phosphate is bound at residue Arg-332. 393-401 (DGMNLVSYE) is a binding site for UDP-alpha-D-glucose. 397-401 (LVSYE) contributes to the UDP binding site. A Phosphoserine modification is found at Ser-503.

It belongs to the glycosyltransferase 20 family. As to quaternary structure, homomer. Component of the trehalose synthase complex that contains at least tps1, ntp1 and tpp1. Interacts with tpp1. Interacts with ntp1; the interaction is independent of stress conditions.

The protein localises to the cytoplasm. The protein resides in the nucleus. It catalyses the reaction D-glucose 6-phosphate + UDP-alpha-D-glucose = alpha,alpha-trehalose 6-phosphate + UDP + H(+). It functions in the pathway carbohydrate biosynthesis. Functionally, synthase catalytic subunit of the trehalose synthase complex that catalyzes the production of trehalose from glucose-6-phosphate and UDP-alpha-D-glucose in a two step process. The disaccharide trehalose serves as a storage carbohydrate that is mobilized during nutrient stress and spore germination. Together with ntp1, regulates the level of trehalose as a protectant for cell integrity during thermal and osmotic stress. This chain is Alpha,alpha-trehalose-phosphate synthase [UDP-forming], found in Schizosaccharomyces pombe (strain 972 / ATCC 24843) (Fission yeast).